The primary structure comprises 174 residues: Transcriptional repressor NrdR (174 aa).

A zinc finger spans residues 3–34; sequence CPFCQHNDTRVIDSRVSEDGTTIRRRRECEAC. Positions 49-139 constitute an ATP-cone domain; that stretch reads PTVVKSDGGR…VYRSFQDVAD (91 aa).

It belongs to the NrdR family. Requires Zn(2+) as cofactor.

Its function is as follows. Negatively regulates transcription of bacterial ribonucleotide reductase nrd genes and operons by binding to NrdR-boxes. The sequence is that of Transcriptional repressor NrdR from Xanthomonas campestris pv. campestris (strain 8004).